A 398-amino-acid polypeptide reads, in one-letter code: Streptopain (398 aa).

A signal peptide spans 1–27 (MNKKKLGIRLLSLLALGGFVLANPVFA). Residues 28-145 (DQNFARNEKE…TTYAGTAEIK (118 aa)) constitute a propeptide that is removed on maturation. The Nucleophile role is filled by cysteine 192. At cysteine 192 the chain carries Cysteine methyl disulfide; in zymogen form. A protein contacts are provided by serine 282 and glycine 339. The Proton acceptor role is filled by histidine 340. Residues 368-390 (RLDALNPSALGTGGGAGGFNGYQ) form a C-terminal active site loop region.

This sequence belongs to the peptidase C10 family. Monomer. In terms of processing, the mature protease is derived from the precursor sequence by cleavage, either in cis via an autocatalytic mechanism, or in trans by mature SpeB or host proteases (trypsin, plasmin or subtilisin). Maturation can involve a number of protein cleavage intermediates. Mature SpeB probably plays the most important role in protein maturation in physiological conditions. Post-translationally, methylthiolation at Cys-192 of the inactive zymogen form is probably involved in the mechanism of secretion of the proteinase into the culture fluid.

Its subcellular location is the secreted. The protein resides in the host extracellular space. It is found in the host cytoplasm. The catalysed reaction is Preferential cleavage with hydrophobic residues at P2, P1 and P1'.. Its activity is regulated as follows. Synthesized as an inactive zymogen to protect the intracellular components of the bacteria from proteolytic activity during protein production. Once secreted into the extracellular milieu, cleaved into the active protease: maturation can be mediated in cis by autocatalytic cleavage, or in trans by mature SpeB or host proteases. Protease activity is strongly inhibited by zinc and copper, which prevent its maturation into an active protease: inhibition by metal ions may be required to prevent proteolysis of streptococcal proteins. Its function is as follows. Cysteine protease that acts as a key streptococcal virulence factor by cleaving host proteins involved in immune response. Triggers inflammation by mediating cleavage of host proteins, which can both promote host pathogenesis by triggering sterile inflammation and/or restrict streptococcal infection, depending on host immune statue and infection site. Cleaves host gasdermin-A (GSDMA) in epithelial cells, promoting GSDMA activation and formation of gasdermin pores, triggering pyroptosis. Pyroptosis triggers the elimination of the infected skin cell, depriving the pathogen of its protective niche, while inducing an inflammatory response. This ultimately prevents bacterial penetration of the epithelial barrier and a subsequent systemic dissemination of the pathogen. Also mediates cleavage of the cytokine precursor interleukin-1 beta (IL1B) to its mature form, resulting in inflammation and septic shock. SpeB-mediated maturation of IL1B plays a dual role depending on infection site: while IL1B inflammatory response prevents bacterial growth during invasive skin infections, it promotes streptococcal infection of the nasopharynx by disrupting colonization resistance mediated by the microbiota. Inhibits host autophagy be catalyzing cleavage and inactivation of key autophagy factors, such as CALCOCO2, NBR1 and SQSTM1. Cleaves and inhibits a number of complement factors, such as C2, C3-beta chain of C3, C4, C5 or SERPING1, thereby promoting evasion of host immunity. May also impair adaptive immunity by catalyzing cleavage and degradation of host immunoglobulins to promote immune system evasion; the relevance of this activity is however unsure in vivo. Catalyzes maturation and release of the peptide hormone bradykinin from the precursor Kininogen-1 (KNG1) to produce hypotension during septic shock. Also involved in bacterial translocation across the host epithelial barrier by mediating cleavage and degradation of host epithelial junction proteins, such as CDH1 and OCLN. Additionally, has been involved in degradation of fibronectin and vitronectin, two host extracellular matrix proteins involved in tissue integrity. Also able to catalyze cleavage and degradation of streptococcal proteins, such as C5a peptidase, EndoS or SmeZ. Degradation of streptococcal proteins is however strictly regulated to preserve integrity of other virulence factors. This is Streptopain (speB) from Streptococcus pyogenes serotype M28 (strain MGAS6180).